Reading from the N-terminus, the 276-residue chain is CDP-diacylglycerol--serine O-phosphatidyltransferase (276 aa).

Residues 1–21 (MVESDEDFAPQEFPHTDTDVI) form a disordered region. Phosphoserine is present on residues Ser-4, Ser-34, Ser-42, Ser-46, Ser-47, and Ser-50. 4 helical membrane-spanning segments follow: residues 82-102 (MADYITMLNGFSGFYSIVSCL), 163-183 (IAFAIGFQTTFDVMILSFFVL), 210-230 (YFEGLPMPTTLALVLGMAYCV), and 248-268 (QILEFHPIILVFFIHGCGMIS).

Belongs to the CDP-alcohol phosphatidyltransferase class-I family. It depends on Mn(2+) as a cofactor. Requires Mg(2+) as cofactor.

It is found in the microsome membrane. It localises to the endoplasmic reticulum membrane. The protein localises to the mitochondrion outer membrane. The enzyme catalyses a CDP-1,2-diacyl-sn-glycerol + L-serine = a 1,2-diacyl-sn-glycero-3-phospho-L-serine + CMP + H(+). Its pathway is phospholipid metabolism; phosphatidylethanolamine biosynthesis; phosphatidylethanolamine from CDP-diacylglycerol: step 1/2. In terms of biological role, catalyzes the synthesis of phosphatidylserine (PtdSer). In Saccharomyces cerevisiae (strain ATCC 204508 / S288c) (Baker's yeast), this protein is CDP-diacylglycerol--serine O-phosphatidyltransferase (CHO1).